We begin with the raw amino-acid sequence, 566 residues long: Pyrophosphate--fructose 6-phosphate 1-phosphotransferase subunit beta 1 (566 aa).

Phosphoserine is present on Ser16. Gly105 contributes to the diphosphate binding site. Mg(2+) is bound at residue Asp199. Substrate is bound by residues 227–229 (TID), 266–267 (KY), 274–276 (MGR), Glu335, and 440–443 (YEGR). Asp229 functions as the Proton acceptor in the catalytic mechanism.

It belongs to the phosphofructokinase type A (PFKA) family. PPi-dependent PFK group II subfamily. Clade 'Long' sub-subfamily. As to quaternary structure, tetramer of two alpha (regulatory) and two beta (catalytic) chains. Requires Mg(2+) as cofactor.

The protein localises to the cytoplasm. It carries out the reaction beta-D-fructose 6-phosphate + diphosphate = beta-D-fructose 1,6-bisphosphate + phosphate + H(+). Its pathway is carbohydrate degradation; glycolysis; D-glyceraldehyde 3-phosphate and glycerone phosphate from D-glucose: step 3/4. Allosterically activated by fructose 2,6-bisphosphate. Functionally, catalytic subunit of pyrophosphate--fructose 6-phosphate 1-phosphotransferase. Catalyzes the phosphorylation of D-fructose 6-phosphate, the first committing step of glycolysis. Uses inorganic phosphate (PPi) as phosphoryl donor instead of ATP like common ATP-dependent phosphofructokinases (ATP-PFKs), which renders the reaction reversible, and can thus function both in glycolysis and gluconeogenesis. The protein is Pyrophosphate--fructose 6-phosphate 1-phosphotransferase subunit beta 1 of Arabidopsis thaliana (Mouse-ear cress).